The chain runs to 199 residues: Peptidyl-tRNA hydrolase (199 aa).

TRNA is bound at residue tyrosine 18. Histidine 23 functions as the Proton acceptor in the catalytic mechanism. TRNA contacts are provided by tyrosine 69, asparagine 71, and asparagine 117.

This sequence belongs to the PTH family. Monomer.

It localises to the cytoplasm. It carries out the reaction an N-acyl-L-alpha-aminoacyl-tRNA + H2O = an N-acyl-L-amino acid + a tRNA + H(+). Functionally, hydrolyzes ribosome-free peptidyl-tRNAs (with 1 or more amino acids incorporated), which drop off the ribosome during protein synthesis, or as a result of ribosome stalling. Its function is as follows. Catalyzes the release of premature peptidyl moieties from peptidyl-tRNA molecules trapped in stalled 50S ribosomal subunits, and thus maintains levels of free tRNAs and 50S ribosomes. The protein is Peptidyl-tRNA hydrolase of Prochlorococcus marinus (strain MIT 9515).